The sequence spans 178 residues: NADH-quinone oxidoreductase subunit B (178 aa).

4 residues coordinate [4Fe-4S] cluster: Cys45, Cys46, Cys111, and Cys140.

It belongs to the complex I 20 kDa subunit family. As to quaternary structure, NDH-1 is composed of 15 different subunits. Subunits NuoB, C, D, E, F, and G constitute the peripheral sector of the complex. The cofactor is [4Fe-4S] cluster.

The protein localises to the cell membrane. The enzyme catalyses a quinone + NADH + 5 H(+)(in) = a quinol + NAD(+) + 4 H(+)(out). NDH-1 shuttles electrons from NADH, via FMN and iron-sulfur (Fe-S) centers, to quinones in the respiratory chain. The immediate electron acceptor for the enzyme in this species is believed to be a menaquinone. Couples the redox reaction to proton translocation (for every two electrons transferred, four hydrogen ions are translocated across the cytoplasmic membrane), and thus conserves the redox energy in a proton gradient. This chain is NADH-quinone oxidoreductase subunit B, found in Deinococcus geothermalis (strain DSM 11300 / CIP 105573 / AG-3a).